The following is a 213-amino-acid chain: dITP/XTP pyrophosphatase (213 aa).

7–12 serves as a coordination point for substrate; that stretch reads TSNLDK. The active-site Proton acceptor is aspartate 74. Position 74 (aspartate 74) interacts with Mg(2+). Substrate contacts are provided by residues serine 75, 165–168, lysine 188, and 193–194; these read FGYD and HR.

Belongs to the HAM1 NTPase family. In terms of assembly, homodimer. It depends on Mg(2+) as a cofactor.

The enzyme catalyses XTP + H2O = XMP + diphosphate + H(+). It carries out the reaction dITP + H2O = dIMP + diphosphate + H(+). The catalysed reaction is ITP + H2O = IMP + diphosphate + H(+). Pyrophosphatase that catalyzes the hydrolysis of nucleoside triphosphates to their monophosphate derivatives, with a high preference for the non-canonical purine nucleotides XTP (xanthosine triphosphate), dITP (deoxyinosine triphosphate) and ITP. Seems to function as a house-cleaning enzyme that removes non-canonical purine nucleotides from the nucleotide pool, thus preventing their incorporation into DNA/RNA and avoiding chromosomal lesions. This chain is dITP/XTP pyrophosphatase, found in Campylobacter concisus (strain 13826).